The sequence spans 316 residues: Ornithine carbamoyltransferase (316 aa).

Carbamoyl phosphate contacts are provided by residues 57-60, Gln-84, Arg-108, and 135-138; these read STRT and HPCQ. L-ornithine-binding positions include Asn-166, Asp-230, and 234–235; that span reads SM. Residues 269–270 and Arg-297 contribute to the carbamoyl phosphate site; that span reads CL.

It belongs to the aspartate/ornithine carbamoyltransferase superfamily. OTCase family.

The protein localises to the cytoplasm. It catalyses the reaction carbamoyl phosphate + L-ornithine = L-citrulline + phosphate + H(+). It functions in the pathway amino-acid biosynthesis; L-arginine biosynthesis; L-arginine from L-ornithine and carbamoyl phosphate: step 1/3. Functionally, reversibly catalyzes the transfer of the carbamoyl group from carbamoyl phosphate (CP) to the N(epsilon) atom of ornithine (ORN) to produce L-citrulline. The chain is Ornithine carbamoyltransferase (argF) from Bacillus cereus (strain ATCC 14579 / DSM 31 / CCUG 7414 / JCM 2152 / NBRC 15305 / NCIMB 9373 / NCTC 2599 / NRRL B-3711).